Consider the following 838-residue polypeptide: Protein translocase subunit SecA (838 aa).

ATP is bound by residues glutamine 86, 104 to 108 (GEGKT), and aspartate 493. Positions 793–838 (NTQAVSGGEDSGKKKTKKPVVKSNTVKRNDPCPCGSGKKYKNCHGQ) are disordered. Zn(2+) is bound by residues cysteine 824, cysteine 826, cysteine 835, and histidine 836.

Belongs to the SecA family. In terms of assembly, monomer and homodimer. Part of the essential Sec protein translocation apparatus which comprises SecA, SecYEG and auxiliary proteins SecDF. Other proteins may also be involved. The cofactor is Zn(2+).

It is found in the cell membrane. The protein resides in the cytoplasm. The catalysed reaction is ATP + H2O + cellular proteinSide 1 = ADP + phosphate + cellular proteinSide 2.. Its function is as follows. Part of the Sec protein translocase complex. Interacts with the SecYEG preprotein conducting channel. Has a central role in coupling the hydrolysis of ATP to the transfer of proteins into and across the cell membrane, serving as an ATP-driven molecular motor driving the stepwise translocation of polypeptide chains across the membrane. This Oceanobacillus iheyensis (strain DSM 14371 / CIP 107618 / JCM 11309 / KCTC 3954 / HTE831) protein is Protein translocase subunit SecA.